Consider the following 450-residue polypeptide: Probable ECA polymerase (450 aa).

Transmembrane regions (helical) follow at residues 6-26 (FSGL…LTWF), 37-57 (VFFS…TSVL), 63-83 (VGVA…CFYA), 118-138 (VILM…NGFL), 155-175 (GVAL…VYFL), 181-201 (AWLF…MIVG), 207-227 (IIIA…ISLW), 228-248 (MLAA…LKRY), 341-361 (LVVM…GLII), 378-398 (YKAA…IVLA), and 410-430 (VFFI…YWLF).

Belongs to the WzyE family. Probably part of a complex composed of WzxE, WzyE and WzzE.

Its subcellular location is the cell inner membrane. Its pathway is bacterial outer membrane biogenesis; enterobacterial common antigen biosynthesis. Probably involved in the polymerization of enterobacterial common antigen (ECA) trisaccharide repeat units. The sequence is that of Probable ECA polymerase from Escherichia coli O139:H28 (strain E24377A / ETEC).